A 315-amino-acid chain; its full sequence is Eukaryotic translation initiation factor 2 subunit 1 (315 aa).

The region spanning 17–88 is the S1 motif domain; the sequence is EDVVMVNVRS…EKGYIDLSKR (72 aa). Residues S49 and S52 each carry the phosphoserine modification. Residues 292 to 315 are disordered; that stretch reads RLERENAEVDGDDDAEEMEAKTED. Positions 299-308 are enriched in acidic residues; that stretch reads EVDGDDDAEE.

It belongs to the eIF-2-alpha family. As to quaternary structure, eukaryotic translation initiation factor 2 eIF2 is a heterotrimeric complex composed of an alpha (EIF2S1), a beta (EIF2S2) and a gamma (EIF2S3) chain. Phosphorylation at Ser-49 and Ser-52 stabilizes the eIF-2/GDP/eIF2B complex and prevents GDP/GTP exchange reaction, thus impairing the recycling of eIF-2 between successive rounds of initiation and leading to global inhibition of translation, while concomitantly initiating the preferential translation of integrated stress response (ISR)-specific mRNAs.

The protein resides in the cytoplasm. It localises to the stress granule. Its subcellular location is the cytosol. Its activity is regulated as follows. Activity is regulated by phosphorylation at Ser-49 and Ser-52, which stabilizes the eIF2/GDP/eIF2B complex and prevents the eIF2B-mediated exchange of GDP for GTP, thereby preventing the formation of the 43S pre-initiation complex (43S PIC). This results in the global attenuation of 5' cap-dependent protein synthesis and concomitant translation of ISR-specific mRNAs that contain a short upstream open reading frame (uORF) in their 5' UTR. Its function is as follows. Member of the eIF2 complex that functions in the early steps of protein synthesis by forming a ternary complex with GTP and initiator tRNA. This complex binds to a 40S ribosomal subunit, followed by mRNA binding to form a 43S pre-initiation complex. Junction of the 60S ribosomal subunit to form the 80S initiation complex is preceded by hydrolysis of the GTP bound to eIF2 and release of an eIF2-GDP binary complex. In order for eIF2 to recycle and catalyze another round of initiation, the GDP bound to eIF2 must exchange with GTP by way of a reaction catalyzed by eIF2B. EIF2S1/eIF2-alpha is a key component of the integrated stress response (ISR), required for adaptation to various stress: phosphorylation by metabolic-stress sensing protein kinases (EIF2AK1/HRI, EIF2AK2/PKR, EIF2AK3/PERK and EIF2AK4/GCN2) in response to stress converts EIF2S1/eIF2-alpha in a global protein synthesis inhibitor, leading to a attenuation of cap-dependent translation, while concomitantly initiating the preferential translation of ISR-specific mRNAs, such as the transcriptional activators ATF4 and QRICH1. The sequence is that of Eukaryotic translation initiation factor 2 subunit 1 (EIF2S1) from Gallus gallus (Chicken).